Consider the following 250-residue polypeptide: Mycofactocin precursor peptide peptidase (250 aa).

A divalent metal cation is bound by residues glutamate 38, histidine 40, aspartate 49, histidine 127, and glutamate 166.

This sequence belongs to the creatininase superfamily. Homooctamer. Requires Fe(2+) as cofactor. Zn(2+) serves as cofactor.

It catalyses the reaction [mycofactocin precursor peptide]-C-terminal glycyl-N-{5-[(4-hydroxyphenyl)methyl]-4,4-dimethyl-2-oxopyrrolidin-3-yl}acetamide + H2O = [mycofactocin precursor peptide]-C-terminal glycine + 3-amino-5-[(4-hydroxyphenyl)methyl]-4,4-dimethyl-2-pyrrolidin-2-one. Peptidase involved in the biosynthesis of the enzyme cofactor mycofactocin (MFT). Catalyzes cleavage of the MftC-modified MftA peptide to liberate its final two residues, which consist of a cross-linked valine-decarboxylated tyrosine dipeptide (named 3-amino-5-[(4-hydroxyphenyl)methyl]-4,4-dimethyl-2-pyrrolidin-2-one or ADHP). This Mycobacterium ulcerans (strain Agy99) protein is Mycofactocin precursor peptide peptidase.